Reading from the N-terminus, the 775-residue chain is 1,4-alpha-glucan branching enzyme GlgB (775 aa).

The interval Met1–Leu39 is disordered. A compositionally biased stretch (low complexity) spans Ala8–Ala24. The Nucleophile role is filled by Asp454. Glu507 acts as the Proton donor in catalysis.

The protein belongs to the glycosyl hydrolase 13 family. GlgB subfamily. As to quaternary structure, monomer.

It catalyses the reaction Transfers a segment of a (1-&gt;4)-alpha-D-glucan chain to a primary hydroxy group in a similar glucan chain.. Its pathway is glycan biosynthesis; glycogen biosynthesis. Catalyzes the formation of the alpha-1,6-glucosidic linkages in glycogen by scission of a 1,4-alpha-linked oligosaccharide from growing alpha-1,4-glucan chains and the subsequent attachment of the oligosaccharide to the alpha-1,6 position. This is 1,4-alpha-glucan branching enzyme GlgB from Ralstonia nicotianae (strain ATCC BAA-1114 / GMI1000) (Ralstonia solanacearum).